The sequence spans 157 residues: Stalk-specific protein A (157 aa).

Positions 1–19 (MRSILILLSLLLTIAFASA) are cleaved as a signal peptide.

The protein localises to the secreted. The protein is Stalk-specific protein A (staA) of Dictyostelium discoideum (Social amoeba).